The sequence spans 140 residues: uncharacterized protein (140 aa).

The segment at 34 to 88 (PLRWRNRARNREKPHSPRAVSSPATHSLPPSNPCRLTPTLSSARPREGSCPSKCS) is disordered.

As to expression, expressed in a range of cell lines, including B-cell lymphoma and prostate.

This is an uncharacterized protein from Homo sapiens (Human).